The chain runs to 461 residues: Vimentin (461 aa).

Composition is skewed to low complexity over residues 1–14 and 35–52; these read MNRTTSRQTTSSSS and SSRQYSSPVRSSRMSYSV. Residues 1 to 52 form a disordered region; the sequence is MNRTTSRQTTSSSSYKRMFGGEGRPSVGMARSTLSSRQYSSPVRSSRMSYSV. The segment at 1-91 is head; the sequence is MNRTTSRQTT…FALSDAINSE (91 aa). Positions 92–127 are coil 1A; that stretch reads FKANRTNEKAEMQHLNDRFASYIDKVRFLEQQNKIL. A coiled-coil region spans residues 92–127; it reads FKANRTNEKAEMQHLNDRFASYIDKVRFLEQQNKIL. In terms of domain architecture, IF rod spans 99–407; it reads EKAEMQHLND…KLLEGEESRI (309 aa). Residues 128–149 form a linker 1 region; sequence LAELEQLKGKGASRIGDLYEDE. Positions 150 to 241 form a coiled coil; sequence MRDLRRQVDQ…KLHDEEVAEL (92 aa). Residues 150–241 form a coil 1B region; it reads MRDLRRQVDQ…KLHDEEVAEL (92 aa). The interval 242 to 264 is linker 12; the sequence is QAQIQDQHVQIDMDVAKPDLTAA. The interval 265 to 403 is coil 2; the sequence is LRDVRVQYET…ATYRKLLEGE (139 aa). Residues 299-403 are a coiled coil; sequence NRNTDAIRQA…ATYRKLLEGE (105 aa). A tail region spans residues 404–461; sequence ESRITTPMPNFSSFNLRESMLEARPMIDNLSKKVVIKTIETRDGHVINESTQNHDDLE.

The protein belongs to the intermediate filament family. In terms of assembly, homomer assembled from elementary dimers. Post-translationally, one of the most prominent phosphoproteins in various cells of mesenchymal origin. Phosphorylation is enhanced during cell division, at which time vimentin filaments are significantly reorganized.

The protein resides in the cytoplasm. Its subcellular location is the cytoskeleton. It is found in the nucleus matrix. Vimentins are class-III intermediate filaments found in various non-epithelial cells, especially mesenchymal cells. Vimentin is attached to the nucleus, endoplasmic reticulum, and mitochondria, either laterally or terminally. The protein is Vimentin (vim) of Oncorhynchus mykiss (Rainbow trout).